We begin with the raw amino-acid sequence, 275 residues long: Epidermal growth factor-like protein 7 (275 aa).

Positions 1-21 (MWGSGELLVAWFLVLAADGTT) are cleaved as a signal peptide. Residues 28–105 (SRRVCTVGIS…TSGLPGACGA (78 aa)) enclose the EMI domain. Disulfide bonds link Cys32–Cys90, Cys57–Cys63, Cys89–Cys103, Cys108–Cys118, Cys112–Cys124, Cys126–Cys135, Cys142–Cys153, and Cys149–Cys162. Positions 104–136 (GAAICQPPCGNGGSCIRPGHCRCPVGWQGDTCQ) constitute an EGF-like 1 domain. The short motif at 131–133 (QGD) is the Cell attachment site element. The EGF-like 2; calcium-binding domain maps to 138 to 178 (DVDECSTGEASCPQRCVNTVGSYWCQGWEGQSPSADGTRCL). The tract at residues 173–193 (DGTRCLSKEGPSPVAPNPTAG) is disordered. Residues 196–220 (SMAREEVYRLQARVDVLEQKLQLVL) adopt a coiled-coil conformation.

As to quaternary structure, interacts with ITGAV/ITGB3 in an RGD-dependent manner, increasing endothelial cell's motility. As to expression, expressed specifically by endothelial cells of the highly vascularized organs heart, lung and kidney.

The protein resides in the secreted. Its subcellular location is the extracellular space. Regulates vascular tubulogenesis in vivo. Inhibits platelet-derived growth factor (PDGF)-BB-induced smooth muscle cell migration and promotes endothelial cell adhesion to the extracellular matrix and angiogenesis. This chain is Epidermal growth factor-like protein 7 (Egfl7), found in Mus musculus (Mouse).